Here is a 196-residue protein sequence, read N- to C-terminus: HTH-type transcriptional regulator EcpR (196 aa).

The region spanning 138 to 196 (KDIKKDKITDREMEIIRMTAQGMLPKSIARIENCSVKTVYTHRRNAEAKLYSKLYKLVQ) is the HTH luxR-type domain. The segment at residues 162–181 (PKSIARIENCSVKTVYTHRR) is a DNA-binding region (H-T-H motif).

This sequence belongs to the EcpR/MatA family.

It localises to the cytoplasm. Part of the ecpRABCDE operon, which encodes the E.coli common pilus (ECP). ECP is found in both commensal and pathogenic strains and plays a dual role in early-stage biofilm development and host cell recognition. Positively regulates the expression of the ecp operon by binding to two TTCCT boxes. This chain is HTH-type transcriptional regulator EcpR (ecpR), found in Escherichia coli O157:H7.